The sequence spans 129 residues: L-ectoine synthase (129 aa).

It belongs to the ectoine synthase family.

It catalyses the reaction (2S)-4-acetamido-2-aminobutanoate = L-ectoine + H2O. It participates in amine and polyamine biosynthesis; ectoine biosynthesis; L-ectoine from L-aspartate 4-semialdehyde: step 3/3. Its function is as follows. Catalyzes the circularization of gamma-N-acetyl-alpha,gamma-diaminobutyric acid (ADABA) to ectoine (1,4,5,6-tetrahydro-2-methyl-4-pyrimidine carboxylic acid), which is an excellent osmoprotectant. The protein is L-ectoine synthase of Desulfosudis oleivorans (strain DSM 6200 / JCM 39069 / Hxd3) (Desulfococcus oleovorans).